Here is a 334-residue protein sequence, read N- to C-terminus: Ferrochelatase (334 aa).

Histidine 207 and glutamate 288 together coordinate Fe cation.

This sequence belongs to the ferrochelatase family.

It localises to the cytoplasm. The catalysed reaction is heme b + 2 H(+) = protoporphyrin IX + Fe(2+). It functions in the pathway porphyrin-containing compound metabolism; protoheme biosynthesis; protoheme from protoporphyrin-IX: step 1/1. Catalyzes the ferrous insertion into protoporphyrin IX. The chain is Ferrochelatase from Helicobacter pylori (strain ATCC 700392 / 26695) (Campylobacter pylori).